The primary structure comprises 382 residues: SAT4 family membrane protein (382 aa).

Positions 1-22 (MFGAELVGRETGGQSTDQPYSY) are disordered. N-linked (GlcNAc...) asparagine glycosylation is present at asparagine 78. The next 2 membrane-spanning stretches (helical) occupy residues 80–100 (SQILYAPLIFVTKLSIFLLYL) and 112–132 (YLSIHLLIWFNLAFYLANFFL). Asparagine 147 is a glycosylation site (N-linked (GlcNAc...) asparagine). Helical transmembrane passes span 159 to 179 (ILVTAAINVVSDLLMLCLPII), 192 to 212 (LGISAIFAAGIFGCFASIMRL), and 228 to 248 (WYTEITCGILASCLPALPTFF). Residue asparagine 269 is glycosylated (N-linked (GlcNAc...) asparagine).

Belongs to the SAT4 family.

The protein localises to the membrane. This is SAT4 family membrane protein from Emericella nidulans (strain FGSC A4 / ATCC 38163 / CBS 112.46 / NRRL 194 / M139) (Aspergillus nidulans).